A 296-amino-acid polypeptide reads, in one-letter code: uncharacterized protein (296 aa).

Transmembrane regions (helical) follow at residues 8-28 (LFVLIAAFFWGTTGTVQALAP), 34-54 (LAFGAFRLLIGGSAMLLAVWI), 63-83 (WAWPLVFLAAVCMACYQPLFF), 89-109 (TGIAVGTVIAIGSAPIIAGTL), 121-141 (SWWIATVLALAGCWLLFSDSS), 147-167 (VAGVLMALGAGASFAGYTLIS), 183-203 (VFMISAILLTPLLWQLDISWI), 208-228 (GLGTSLYIGLIATCAAYFLFA), 238-258 (AAVTLSLAEPLTASLLGVFFI), and 261-281 (MLSPSSWLGIALMMLGLLVIS). 2 consecutive EamA domains span residues 15 to 138 (FFWG…LLFS) and 158 to 282 (ASFA…VISA).

This sequence belongs to the EamA transporter family.

The protein resides in the cell membrane. This is an uncharacterized protein from Bacillus subtilis (strain 168).